Reading from the N-terminus, the 218-residue chain is 7-cyano-7-deazaguanine synthase (218 aa).

Residue 9–19 participates in ATP binding; the sequence is YSGGMDSFTVL. Cys185, Cys193, Cys196, and Cys199 together coordinate Zn(2+).

It belongs to the QueC family. Zn(2+) is required as a cofactor.

It carries out the reaction 7-carboxy-7-deazaguanine + NH4(+) + ATP = 7-cyano-7-deazaguanine + ADP + phosphate + H2O + H(+). It functions in the pathway purine metabolism; 7-cyano-7-deazaguanine biosynthesis. Its function is as follows. Catalyzes the ATP-dependent conversion of 7-carboxy-7-deazaguanine (CDG) to 7-cyano-7-deazaguanine (preQ(0)). The sequence is that of 7-cyano-7-deazaguanine synthase from Alteromonas mediterranea (strain DSM 17117 / CIP 110805 / LMG 28347 / Deep ecotype).